The chain runs to 356 residues: Altered inheritance of mitochondria protein 23, mitochondrial (356 aa).

A mitochondrion-targeting transit peptide spans 1-32 (MLKVPLSDVLSQKMLFLKSFRYFHCTKYFSRD).

The protein belongs to the AIM23 family.

It localises to the mitochondrion. The chain is Altered inheritance of mitochondria protein 23, mitochondrial (AIM23) from Saccharomyces cerevisiae (strain ATCC 204508 / S288c) (Baker's yeast).